Consider the following 555-residue polypeptide: Cytochrome P450 monooxygenase abl2 (555 aa).

The next 2 membrane-spanning stretches (helical) occupy residues 38 to 58 (SFDL…ALFI) and 141 to 161 (VFIG…APLA). Asn325 and Asn360 each carry an N-linked (GlcNAc...) asparagine glycan. Cys489 contacts heme.

This sequence belongs to the cytochrome P450 family. Heme serves as cofactor.

It localises to the membrane. It functions in the pathway hormone biosynthesis. Cytochrome P450 monooxygenase; part of the gene cluster that mediates the biosynthesis of abscisic acid (ABA), a phytohormone that acts antagonistically toward salicylic acid (SA), jasmonic acid (JA) and ethylene (ETH) signaling, to impede plant defense responses. The first step of the pathway catalyzes the reaction from farnesyl diphosphate to alpha-ionylideneethane performed by the alpha-ionylideneethane synthase abl3 via a three-step reaction mechanism involving 2 neutral intermediates, beta-farnesene and allofarnesene. The cytochrome P450 monooxygenase abl1 might then be involved in the conversion of alpha-ionylideneethane to alpha-ionylideneacetic acid. Alpha-ionylideneacetic acid is further converted to abscisic acid in 2 steps involving the cytochrome P450 monooxygenase abl2 and the short-chain dehydrogenase/reductase abl4, via the intermediates 1'-deoxy-ABA or 1',4'-trans-diol-ABA, depending on the order of action of these 2 enzymes. Abl2 is responsible for the hydroxylation of carbon atom C-1' and abl4 might be involved in the oxidation of the C-4' carbon atom. The sequence is that of Cytochrome P450 monooxygenase abl2 from Leptosphaeria maculans (strain JN3 / isolate v23.1.3 / race Av1-4-5-6-7-8) (Blackleg fungus).